Consider the following 378-residue polypeptide: Spermidine/putrescine import ATP-binding protein PotA (378 aa).

The ABC transporter domain maps to 18–248 (VQLAGIRKCF…PKNLFVAGFI (231 aa)). 50–57 (GPSGCGKT) provides a ligand contact to ATP.

It belongs to the ABC transporter superfamily. Spermidine/putrescine importer (TC 3.A.1.11.1) family. As to quaternary structure, the complex is composed of two ATP-binding proteins (PotA), two transmembrane proteins (PotB and PotC) and a solute-binding protein (PotD).

The protein resides in the cell inner membrane. It carries out the reaction ATP + H2O + polyamine-[polyamine-binding protein]Side 1 = ADP + phosphate + polyamineSide 2 + [polyamine-binding protein]Side 1.. In terms of biological role, part of the ABC transporter complex PotABCD involved in spermidine/putrescine import. Responsible for energy coupling to the transport system. The sequence is that of Spermidine/putrescine import ATP-binding protein PotA from Shigella flexneri.